The chain runs to 78 residues: Large ribosomal subunit protein bL28 (78 aa).

Positions 1 to 28 are disordered; the sequence is MSAYCQVTGRKPGFGKQVSHSHRHTSRR.

Belongs to the bacterial ribosomal protein bL28 family.

In Corynebacterium urealyticum (strain ATCC 43042 / DSM 7109), this protein is Large ribosomal subunit protein bL28.